The following is a 291-amino-acid chain: ATP synthase gamma chain (291 aa).

It belongs to the ATPase gamma chain family. As to quaternary structure, F-type ATPases have 2 components, CF(1) - the catalytic core - and CF(0) - the membrane proton channel. CF(1) has five subunits: alpha(3), beta(3), gamma(1), delta(1), epsilon(1). CF(0) has three main subunits: a, b and c.

The protein resides in the cell inner membrane. Its function is as follows. Produces ATP from ADP in the presence of a proton gradient across the membrane. The gamma chain is believed to be important in regulating ATPase activity and the flow of protons through the CF(0) complex. The polypeptide is ATP synthase gamma chain (Neisseria meningitidis serogroup C (strain 053442)).